The chain runs to 166 residues: Ribosome maturation factor RimM (166 aa).

Residues 94–166 (EGEYYHADLI…IVIEAAYADQ (73 aa)) form the PRC barrel domain.

It belongs to the RimM family. As to quaternary structure, binds ribosomal protein uS19.

Its subcellular location is the cytoplasm. In terms of biological role, an accessory protein needed during the final step in the assembly of 30S ribosomal subunit, possibly for assembly of the head region. Essential for efficient processing of 16S rRNA. May be needed both before and after RbfA during the maturation of 16S rRNA. It has affinity for free ribosomal 30S subunits but not for 70S ribosomes. This Novosphingobium aromaticivorans (strain ATCC 700278 / DSM 12444 / CCUG 56034 / CIP 105152 / NBRC 16084 / F199) protein is Ribosome maturation factor RimM.